Here is a 351-residue protein sequence, read N- to C-terminus: Glycerol-3-phosphate dehydrogenase 1-like protein (351 aa).

12 to 17 (GSGNWG) serves as a coordination point for NAD(+). K122 is a binding site for substrate. Position 155 (A155) interacts with NAD(+). The Proton acceptor role is filled by K206. NAD(+) is bound by residues R271, K298, and Q300. A substrate-binding site is contributed by 271–272 (RN).

It belongs to the NAD-dependent glycerol-3-phosphate dehydrogenase family. As to quaternary structure, interacts with SCN5A.

The protein localises to the cytoplasm. The catalysed reaction is sn-glycerol 3-phosphate + NAD(+) = dihydroxyacetone phosphate + NADH + H(+). Its function is as follows. Plays a role in regulating cardiac sodium current; decreased enzymatic activity with resulting increased levels of glycerol 3-phosphate activating the DPD1L-dependent SCN5A phosphorylation pathway, may ultimately lead to decreased sodium current; cardiac sodium current may also be reduced due to alterations of NAD(H) balance induced by DPD1L. This is Glycerol-3-phosphate dehydrogenase 1-like protein (Gpd1l) from Mus musculus (Mouse).